A 125-amino-acid polypeptide reads, in one-letter code: Actin, alpha skeletal muscle (125 aa).

This sequence belongs to the actin family. In terms of assembly, polymerization of globular actin (G-actin) leads to a structural filament (F-actin) in the form of a two-stranded helix. Each actin can bind to 4 others. Post-translationally, methylated at His-75 by SETD3.

Its subcellular location is the cytoplasm. It localises to the cytoskeleton. Its function is as follows. Actins are highly conserved proteins that are involved in various types of cell motility and are ubiquitously expressed in all eukaryotic cells. This Pleurodeles waltl (Iberian ribbed newt) protein is Actin, alpha skeletal muscle.